A 396-amino-acid chain; its full sequence is Phosphoglycerate kinase (396 aa).

Substrate-binding positions include 21-23 (DLN), arginine 36, 59-62 (HLGR), arginine 113, and arginine 146. ATP contacts are provided by residues lysine 197, glutamate 319, and 345-348 (GGDT).

Belongs to the phosphoglycerate kinase family. As to quaternary structure, monomer.

It is found in the cytoplasm. It catalyses the reaction (2R)-3-phosphoglycerate + ATP = (2R)-3-phospho-glyceroyl phosphate + ADP. It participates in carbohydrate degradation; glycolysis; pyruvate from D-glyceraldehyde 3-phosphate: step 2/5. This is Phosphoglycerate kinase from Legionella pneumophila (strain Paris).